The following is a 40-amino-acid chain: Large ribosomal subunit protein bL36A (40 aa).

This sequence belongs to the bacterial ribosomal protein bL36 family.

The chain is Large ribosomal subunit protein bL36A from Saccharopolyspora erythraea (strain ATCC 11635 / DSM 40517 / JCM 4748 / NBRC 13426 / NCIMB 8594 / NRRL 2338).